We begin with the raw amino-acid sequence, 341 residues long: MKAHFGVTVWLGVCCSMTLLMVVIGGITRLTHSGLSITEWQPIVGVVPPIGDEAWLREKEKYAQTPEYRHRAADISLDDFKRIYIIEYIHRLFGRALGAVFCLPIPYFAITKRIDRAMVAKLLIVALLGGMQGAMGWFMVKSGLVDTPRVSHYRLAGHLFLTILLFSILWHSFLRCAGVRSTTTTTNARFFTAAAVVGLTVLQMVLGALVAGLDAGLTYNTFPLMDGAIIPQSLFSAKLWHGGFLHDVTAVQFLHRLVAVLIVVCAAPLPFWLKTRGAWLFLACVALQFLLGVATLVSVVHIFLAAMHQVFGFVTLAAGVHMLCRLRREGSTCISGHAGIS.

Helical transmembrane passes span 7-27 (VTVW…IGGI), 92-112 (LFGR…AITK), 118-138 (MVAK…MGWF), 159-179 (LFLT…CAGV), 190-210 (FFTA…GALV), 253-273 (FLHR…PFWL), 280-300 (LFLA…VSVV), and 302-322 (IFLA…GVHM). Position 255 (histidine 255) interacts with heme. Histidine 308 is a binding site for heme.

Belongs to the COX15/CtaA family. Type 2 subfamily. Interacts with CtaB. Requires heme b as cofactor.

Its subcellular location is the cell membrane. The enzyme catalyses Fe(II)-heme o + 2 A + H2O = Fe(II)-heme a + 2 AH2. It participates in porphyrin-containing compound metabolism; heme A biosynthesis; heme A from heme O: step 1/1. In terms of biological role, catalyzes the conversion of heme O to heme A by two successive hydroxylations of the methyl group at C8. The first hydroxylation forms heme I, the second hydroxylation results in an unstable dihydroxymethyl group, which spontaneously dehydrates, resulting in the formyl group of heme A. The sequence is that of Heme A synthase from Anaplasma marginale (strain St. Maries).